The primary structure comprises 453 residues: Kynureninase (453 aa).

Pyridoxal 5'-phosphate contacts are provided by residues L111, T112, 139–142, S196, D226, H229, and Y251; that span reads FPSD. N6-(pyridoxal phosphate)lysine is present on K252. Residues W286 and N314 each coordinate pyridoxal 5'-phosphate.

It belongs to the kynureninase family. In terms of assembly, homodimer. The cofactor is pyridoxal 5'-phosphate.

It is found in the cytoplasm. It localises to the nucleus. The enzyme catalyses L-kynurenine + H2O = anthranilate + L-alanine + H(+). It carries out the reaction 3-hydroxy-L-kynurenine + H2O = 3-hydroxyanthranilate + L-alanine + H(+). Its pathway is amino-acid degradation; L-kynurenine degradation; L-alanine and anthranilate from L-kynurenine: step 1/1. It participates in cofactor biosynthesis; NAD(+) biosynthesis; quinolinate from L-kynurenine: step 2/3. Catalyzes the cleavage of L-kynurenine (L-Kyn) and L-3-hydroxykynurenine (L-3OHKyn) into anthranilic acid (AA) and 3-hydroxyanthranilic acid (3-OHAA), respectively. The sequence is that of Kynureninase from Saccharomyces cerevisiae (strain ATCC 204508 / S288c) (Baker's yeast).